Reading from the N-terminus, the 151-residue chain is SsrA-binding protein (151 aa).

The tract at residues 132 to 151 is disordered; it reads KRQTIKKRDQDREIHRKYGI.

This sequence belongs to the SmpB family.

It localises to the cytoplasm. Functionally, required for rescue of stalled ribosomes mediated by trans-translation. Binds to transfer-messenger RNA (tmRNA), required for stable association of tmRNA with ribosomes. tmRNA and SmpB together mimic tRNA shape, replacing the anticodon stem-loop with SmpB. tmRNA is encoded by the ssrA gene; the 2 termini fold to resemble tRNA(Ala) and it encodes a 'tag peptide', a short internal open reading frame. During trans-translation Ala-aminoacylated tmRNA acts like a tRNA, entering the A-site of stalled ribosomes, displacing the stalled mRNA. The ribosome then switches to translate the ORF on the tmRNA; the nascent peptide is terminated with the 'tag peptide' encoded by the tmRNA and targeted for degradation. The ribosome is freed to recommence translation, which seems to be the essential function of trans-translation. The chain is SsrA-binding protein from Lactobacillus gasseri (strain ATCC 33323 / DSM 20243 / BCRC 14619 / CIP 102991 / JCM 1131 / KCTC 3163 / NCIMB 11718 / NCTC 13722 / AM63).